The sequence spans 185 residues: Ribosome-recycling factor (185 aa).

Belongs to the RRF family.

The protein resides in the cytoplasm. Its function is as follows. Responsible for the release of ribosomes from messenger RNA at the termination of protein biosynthesis. May increase the efficiency of translation by recycling ribosomes from one round of translation to another. This Mycobacterium bovis (strain BCG / Pasteur 1173P2) protein is Ribosome-recycling factor.